The primary structure comprises 277 residues: MHLRLISCFFIILNFMEYIGSQNASRGRRQRRMHPNVSQGCQGGCATCSDYNGCLSCKPRLFFVLERIGMKQIGVCLSSCPSGYYGTRYPDINKCTKCKVDCDTCFNKNFCTKCKSGFYLHLGKCLDSCPEGLEANNHTMECVSIVHCEASEWSPWSPCMKKGKTCGFKRGTETRVRDILQHPSAKGNLCPPTSETRTCIVQRKKCSKGERGKKGRERKRKKLNKEERKETSSSSDSKGLESSIETPDQQENKERQQQQKRRARDKQQKSVSVSTVH.

The N-terminal stretch at 1–21 (MHLRLISCFFIILNFMEYIGS) is a signal peptide. 2 FU repeats span residues 35–86 (PNVS…GYYG) and 92–135 (INKC…GLEA). N36 is a glycosylation site (N-linked (GlcNAc...) asparagine). Cystine bridges form between C41-C48, C45-C54, C57-C76, C80-C95, C98-C105, C102-C111, C114-C125, C129-C142, C148-C190, C159-C166, and C199-C206. The 61-residue stretch at 147 to 207 (HCEASEWSPW…TCIVQRKKCS (61 aa)) folds into the TSP type-1 domain. Residues 210-277 (ERGKKGRERK…QKSVSVSTVH (68 aa)) are disordered. The segment covering 213–223 (KKGRERKRKKL) has biased composition (basic residues). Over residues 232-245 (SSSSDSKGLESSIE) the composition is skewed to low complexity.

This sequence belongs to the R-spondin family. As to quaternary structure, interacts with the extracellular domain of FZD8 and LRP6. It however does not form a ternary complex with FZD8 and LRP6. Interacts with WNT1. Binds heparin. Interacts with LGR4, LGR5 and LGR6. Highly expressed in endothelial cells.

The protein localises to the secreted. Its function is as follows. Activator of the canonical Wnt signaling pathway by acting as a ligand for LGR4-6 receptors, which acts as a key regulator of angiogenesis. Upon binding to LGR4-6 (LGR4, LGR5 or LGR6), LGR4-6 associate with phosphorylated LRP6 and frizzled receptors that are activated by extracellular Wnt receptors, triggering the canonical Wnt signaling pathway to increase expression of target genes. Also regulates the canonical Wnt/beta-catenin-dependent pathway and non-canonical Wnt signaling by acting as an inhibitor of ZNRF3, an important regulator of the Wnt signaling pathway. Acts as a ligand for frizzled FZD8 and LRP6. May negatively regulate the TGF-beta pathway. Acts as a key regulator of angiogenesis by controlling vascular stability and pruning: acts by activating the non-canonical Wnt signaling pathway in endothelial cells. Can also amplify Wnt signaling pathway independently of LGR4-6 receptors, possibly by acting as a direct antagonistic ligand to RNF43 and ZNRF3. The protein is R-spondin-3 (Rspo3) of Mus musculus (Mouse).